We begin with the raw amino-acid sequence, 274 residues long: Diaminopimelate epimerase (274 aa).

Substrate is bound by residues Asn-11 and Asn-60. The active-site Proton donor is the Cys-69. Residues 70–71 (GN), Asn-191, and 209–210 (ER) each bind substrate. Cys-218 (proton acceptor) is an active-site residue. 219 to 220 (GS) is a binding site for substrate.

The protein belongs to the diaminopimelate epimerase family. As to quaternary structure, homodimer.

The protein localises to the cytoplasm. It carries out the reaction (2S,6S)-2,6-diaminopimelate = meso-2,6-diaminopimelate. The protein operates within amino-acid biosynthesis; L-lysine biosynthesis via DAP pathway; DL-2,6-diaminopimelate from LL-2,6-diaminopimelate: step 1/1. In terms of biological role, catalyzes the stereoinversion of LL-2,6-diaminopimelate (L,L-DAP) to meso-diaminopimelate (meso-DAP), a precursor of L-lysine and an essential component of the bacterial peptidoglycan. The chain is Diaminopimelate epimerase from Caldanaerobacter subterraneus subsp. tengcongensis (strain DSM 15242 / JCM 11007 / NBRC 100824 / MB4) (Thermoanaerobacter tengcongensis).